The sequence spans 445 residues: MAYFPNIGTIPYEGPESRNPLAFKFYNPDEKVGGKTMEEHLRFSVAYWHTFTGDGSDPFGVGNMIRPWNTYSGMDLAKARVEAAFELFEKLNVPFFCFHDVDIAPEGETLSETYKNLDEIVDMIEEYMKTSKTKLLWNTANLFSHPRFVHGAATSCNADVFAYAAAKVKKGLEIAKRLGAENYVFWGGREGYETLLNTDMKLELDNLARFLHMAVDYAKEIGFDGQFLIEPKPKEPTKHQYDFDVATALAFLQTYGLKDHFKFNIEANHATLAGHTFEHELRVARIHGMLGSVDANQGDTLLGWDTDEFPTDLYTTTLAMYEILQNGGLGRGGLNFDAKVRRGSFEPEDLFYAHIAGMDSFAIGLKVAHRLLEDRVFEQFIEERYKSYTEGIGREIVEGTADFKKLEEYALQLGDIRNTSGRLERLKTLLNQYLLEVSAPSGSRS.

Active-site residues include His-99 and Asp-102. Residues Glu-230, Glu-266, His-269, Asp-294, Asp-305, Asp-307, and Asp-337 each coordinate Mg(2+).

The protein belongs to the xylose isomerase family. As to quaternary structure, homotetramer. The cofactor is Mg(2+).

It is found in the cytoplasm. The catalysed reaction is alpha-D-xylose = alpha-D-xylulofuranose. This is Xylose isomerase from Geobacillus kaustophilus (strain HTA426).